We begin with the raw amino-acid sequence, 57 residues long: Andropin (57 aa).

The signal sequence occupies residues 1-23 (MKYFVVLVVLALILAITVDPSDA).

It belongs to the andropin family. As to expression, ejaculatory duct of adult males.

It localises to the secreted. Its function is as follows. Male-specific peptide with moderate activity against Gram-positive bacteria. In Drosophila sechellia (Fruit fly), this protein is Andropin (Anp).